The following is a 1405-amino-acid chain: DNA-directed RNA polymerase subunit beta' (1405 aa).

Zn(2+) is bound by residues C70, C72, C85, and C88. Residues D460, D462, and D464 each contribute to the Mg(2+) site. Residues C814, C888, C895, and C898 each coordinate Zn(2+).

This sequence belongs to the RNA polymerase beta' chain family. In terms of assembly, the RNAP catalytic core consists of 2 alpha, 1 beta, 1 beta' and 1 omega subunit. When a sigma factor is associated with the core the holoenzyme is formed, which can initiate transcription. Requires Mg(2+) as cofactor. The cofactor is Zn(2+).

The catalysed reaction is RNA(n) + a ribonucleoside 5'-triphosphate = RNA(n+1) + diphosphate. Functionally, DNA-dependent RNA polymerase catalyzes the transcription of DNA into RNA using the four ribonucleoside triphosphates as substrates. This is DNA-directed RNA polymerase subunit beta' from Shewanella sp. (strain MR-7).